The chain runs to 51 residues: uncharacterized protein (51 aa).

This is an uncharacterized protein from Thermoproteus tenax virus 1 (strain KRA1) (TTV1).